Consider the following 644-residue polypeptide: MMGGGLVMDQGMMFPGVHNFVDLLQQNGGDKNLGFGALVPQTSSGEQCVMGEGDLVDPPPESFPDAGEDDSDDDVEDIEELERRMWRDRMKLKRLKELQLSRGKDPAGGVVGDPSKPRQSQEQARRKKMSRAQDGILKYMLKMMEVCRAQGFVYGIIPEKGKPVSGASDNLRGWWKEKVRFDRNGPAAIAKYQADNAVPGFESELASGTGSPHSLQELQDTTLGSLLSALMQHCDPPQRRYPLEKGVPPPWWPTGDEEWWPELGIPKDQGPPPYKKPHDLKKAWKVSVLTAVIKHMSPDIEKIRRLVRQSKCLQDKMTAKEISTWLAVVKQEEELYLKLNPGARPPAPTGGITSAISFNASSSEYDVDVVDDCKGDEAGNQKAVVVADPTAFNLGAAMLNDKFLMPASMKEEATDVEFIQKRSASGAEPELMLNNRVYTCHNVQCPHSDYGYGFLDRNARNSHQYTCKYNDPLQQSTENKPSPPAIFPATYNTPNQALNNLDFGLPMDGQRSITELMNMYDNNFVANKNLSNDNATIMERPNAVNPRIQIEEGFFGQGSGIGGSNGGVFEDVNGMMQQPQQTTPAQQQFFIRDDTPFGNQMGDINGASEFRFGSGFNMSGAVEYPGAMQGQQKNDGASEFEELE.

Disordered stretches follow at residues 47-75 and 97-131; these read QCVM…DDDV and ELQL…KMSR. Residues 66–75 show a composition bias toward acidic residues; sequence AGEDDSDDDV.

Belongs to the EIN3 family. As to expression, highly expressed in roots. Expressed at low levels in leaves and panicles.

The protein resides in the nucleus. Its function is as follows. Transcription factor acting as a positive regulator in the ethylene response pathway. Involved in wound signaling by binding specifically to the DNA sequence 5'-ATGTACCT-3' found in the promoter of some wound-inducible genes. Binds directly to the DNA sequence 5'-TGTTACAAATACC-3' in the promoter of the GA20OX2 gene to activate its expression at the transcriptional level during ethylene signaling. In Oryza sativa subsp. japonica (Rice), this protein is Protein ETHYLENE-INSENSITIVE 3-like 1b.